A 104-amino-acid polypeptide reads, in one-letter code: Large ribosomal subunit protein uL24 (104 aa).

The protein belongs to the universal ribosomal protein uL24 family. As to quaternary structure, part of the 50S ribosomal subunit.

In terms of biological role, one of two assembly initiator proteins, it binds directly to the 5'-end of the 23S rRNA, where it nucleates assembly of the 50S subunit. Its function is as follows. One of the proteins that surrounds the polypeptide exit tunnel on the outside of the subunit. The chain is Large ribosomal subunit protein uL24 from Corynebacterium jeikeium (strain K411).